Consider the following 478-residue polypeptide: Putative UDP-glucose flavonoid 3-O-glucosyltransferase 3 (478 aa).

This sequence belongs to the UDP-glycosyltransferase family.

The sequence is that of Putative UDP-glucose flavonoid 3-O-glucosyltransferase 3 from Fragaria ananassa (Strawberry).